A 309-amino-acid chain; its full sequence is MPELPEVETTKTSLAPLLGQKVTNVQVFQPKLRWSIPDNLADLVDYTLDSVERRAKYLILNFIPLADDGISSTVQPRNLQPRQLLVHLGMSGSLQQHNHASDKRKHDHLIMSFIGADSTQTQLHYYDPRRFGSILWLEEYGDKLLNHLGPEPLSDAFTADYLYHLIQRSRQSIQTQNSKSIKKQPIKRAIKSVIMEQQAVVGVGNIYATESLYLSGIHPATPANEVSYAQIVILVAHIKTILQKAIKLGGSTLRDFTVADGQTGYFQQTLNVYGRQGNACPHCESTLENIKLNGRASVYCPLCQPIISM.

Residue P2 is the Schiff-base intermediate with DNA of the active site. Catalysis depends on E3, which acts as the Proton donor. K56 (proton donor; for beta-elimination activity) is an active-site residue. Positions 106 and 129 each coordinate DNA. Residues 271 to 305 form an FPG-type zinc finger; the sequence is NVYGRQGNACPHCESTLENIKLNGRASVYCPLCQP. Catalysis depends on R295, which acts as the Proton donor; for delta-elimination activity.

This sequence belongs to the FPG family. As to quaternary structure, monomer. Zn(2+) is required as a cofactor.

It carries out the reaction Hydrolysis of DNA containing ring-opened 7-methylguanine residues, releasing 2,6-diamino-4-hydroxy-5-(N-methyl)formamidopyrimidine.. It catalyses the reaction 2'-deoxyribonucleotide-(2'-deoxyribose 5'-phosphate)-2'-deoxyribonucleotide-DNA = a 3'-end 2'-deoxyribonucleotide-(2,3-dehydro-2,3-deoxyribose 5'-phosphate)-DNA + a 5'-end 5'-phospho-2'-deoxyribonucleoside-DNA + H(+). In terms of biological role, involved in base excision repair of DNA damaged by oxidation or by mutagenic agents. Acts as a DNA glycosylase that recognizes and removes damaged bases. Has a preference for oxidized purines, such as 7,8-dihydro-8-oxoguanine (8-oxoG). Has AP (apurinic/apyrimidinic) lyase activity and introduces nicks in the DNA strand. Cleaves the DNA backbone by beta-delta elimination to generate a single-strand break at the site of the removed base with both 3'- and 5'-phosphates. In Psychrobacter arcticus (strain DSM 17307 / VKM B-2377 / 273-4), this protein is Formamidopyrimidine-DNA glycosylase.